A 328-amino-acid chain; its full sequence is MPVTIKDVAKAAGVSPSTVTRVIQNKSTISDETKKRVRKAMKELNYHPNLNARSLVSSYTQVIGLVLPDDSDAFYQNPFFPSVLRGISQVASENHYAIQIATGKDEKERLNAISQMVYGKRVDGLIFLYAQEEDPLVKLVAEEQFPFLILGKSLSPFIPLVDNDNVQAGFDATEYFIKKGCKRIAFIGGSKKLFVTKDRLTGYEQALKHYKLTTDNNRIYFADEFLEEKGYKFSKRLFKHDPQIDAIITTDSLLAEGVCNYIAKHQLDVPVLSFDSVNPKLNLAAYVDINSLELGRVSLETILQIINDNKNNKQICYRQLIAHKIIEK.

Residues 2 to 57 enclose the HTH lacI-type domain; the sequence is PVTIKDVAKAAGVSPSTVTRVIQNKSTISDETKKRVRKAMKELNYHPNLNARSLVS. The H-T-H motif DNA-binding region spans 5–24; the sequence is IKDVAKAAGVSPSTVTRVIQ. The tract at residues 173–218 is inducer binding; sequence TEYFIKKGCKRIAFIGGSKKLFVTKDRLTGYEQALKHYKLTTDNNR. The interval 282-291 is dimerization; the sequence is NLAAYVDINS.

Transcriptional repressor of the maltosaccharide utilization operons malxCD and malMP. This is HTH-type transcriptional regulator MalR (malR) from Streptococcus pneumoniae serotype 4 (strain ATCC BAA-334 / TIGR4).